The primary structure comprises 776 residues: DNA ligase (776 aa).

NAD(+) contacts are provided by residues 31–35, 80–81, and E112; these read DAEYD and SL. K114 serves as the catalytic N6-AMP-lysine intermediate. 4 residues coordinate NAD(+): R135, E172, K288, and K312. Residues C406, C409, C436, and C442 each coordinate Zn(2+). A BRCT domain is found at 693-776; that stretch reads AEGLPLAGQT…VFLDEQGIAI (84 aa).

It belongs to the NAD-dependent DNA ligase family. LigA subfamily. Requires Mg(2+) as cofactor. It depends on Mn(2+) as a cofactor.

It carries out the reaction NAD(+) + (deoxyribonucleotide)n-3'-hydroxyl + 5'-phospho-(deoxyribonucleotide)m = (deoxyribonucleotide)n+m + AMP + beta-nicotinamide D-nucleotide.. In terms of biological role, DNA ligase that catalyzes the formation of phosphodiester linkages between 5'-phosphoryl and 3'-hydroxyl groups in double-stranded DNA using NAD as a coenzyme and as the energy source for the reaction. It is essential for DNA replication and repair of damaged DNA. This is DNA ligase from Pseudomonas putida (strain W619).